The following is a 560-amino-acid chain: Exonuclease subunit 2 (560 aa).

Residue 36-43 (GRNGGGKS) participates in ATP binding.

The protein to phage T5 protein D13 and to yeast RAD52. In terms of assembly, consists of two subunits: gp46 and gp47.

Exonuclease that plays a role in viral genome replication, DNA recombination, and host DNA degradation. The chain is Exonuclease subunit 2 (46) from Enterobacteria phage T4 (Bacteriophage T4).